We begin with the raw amino-acid sequence, 515 residues long: MIEIDLTSFVIITLSLAVGLTGGYYGRRFLAESRIRTAEEEVAKMLDEAAKEVEAKKKEILLEAKDEIHRNRQDAEKDIRERRRELDRVERRIIQKEEMIDKKTENMEKKEQVLLEKEKETEKTQQDLQMVLSQQLKELERLSGLSSEEAKELLLYNVSQQIRQETAVLIRNIENEAKEEADKKAKNIVSLAIQKCAADVVSESTVSVVPLPNDEMKGRIIGREGRNIRTFEALSGVDLIIDDTPEAVILSSFDPIRREVARVALGNLVSDGRIHPARIEEMVEKARKEIEQEIREVGEQAAFEVGVHGLHPELIKLLGRLKYRTSYGQNVLRHSVEVAHLAGIMAAELEVDIMLAKRSGLLHDIGKAVDHEVSGPHVEIGVDLAKKYRENKDVIHGIEAHHGDIEPETVEAVLVQAADAISASRPGARRETLETYIKRLEKLENVAESFSGVDRTFAIQAGREIRIIVKPEEIDDLHSINLARDIAAKIEQDLDYPGQIKVVVIRETRSVEYAK.

Residues 6–26 (LTSFVIITLSLAVGLTGGYYG) traverse the membrane as a helical segment. Positions 205–290 (TVSVVPLPND…EMVEKARKEI (86 aa)) constitute a KH domain. Residues 331 to 424 (VLRHSVEVAH…VQAADAISAS (94 aa)) form the HD domain.

Belongs to the RNase Y family.

The protein localises to the cell membrane. Functionally, endoribonuclease that initiates mRNA decay. This Syntrophomonas wolfei subsp. wolfei (strain DSM 2245B / Goettingen) protein is Ribonuclease Y.